Consider the following 408-residue polypeptide: Histidine--tRNA ligase (408 aa).

Belongs to the class-II aminoacyl-tRNA synthetase family. As to quaternary structure, homodimer.

It localises to the cytoplasm. The enzyme catalyses tRNA(His) + L-histidine + ATP = L-histidyl-tRNA(His) + AMP + diphosphate + H(+). In Campylobacter concisus (strain 13826), this protein is Histidine--tRNA ligase.